Reading from the N-terminus, the 298-residue chain is ADP/ATP translocase 1 (298 aa).

Topologically, residues Met-1 to Ser-7 are mitochondrial intermembrane. At Ser-2 the chain carries N-acetylserine. The stretch at Leu-6 to Ile-98 is one Solcar 1 repeat. A Phosphoserine modification is found at Ser-7. Residues Phe-8–Gln-37 form a helical membrane-spanning segment. Over Val-38–Asn-74 the chain is Mitochondrial matrix. The residue at position 52 (Lys-52) is an N6,N6,N6-trimethyllysine. Lys-52 bears the N6-methyllysine mark. A helical transmembrane segment spans residues Leu-75–Phe-99. The ADP site is built by Arg-80 and Lys-92. Residues Leu-100–Phe-109 are Mitochondrial intermembrane-facing. The chain crosses the membrane as a helical span at residues Trp-110–Phe-130. Solcar repeat units follow at residues Arg-111–Met-201 and Val-212–Phe-297. Over Val-131–Asn-178 the chain is Mitochondrial matrix. Position 147 is an N6-succinyllysine (Lys-147). The residue at position 160 (Cys-160) is an S-nitrosocysteine. A helical transmembrane segment spans residues Val-179–Lys-199. The Mitochondrial intermembrane segment spans residues Gly-200–Ile-210. The chain crosses the membrane as a helical span at residues Ile-211 to Phe-231. At Asp-232–Gly-273 the chain is on the mitochondrial matrix side. Arg-235 provides a ligand contact to ADP. The tract at residues Arg-235–Met-240 is important for transport activity. The Nucleotide carrier signature motif motif lies at Arg-235–Met-240. Lys-245 and Lys-272 each carry N6-succinyllysine. A helical membrane pass occupies residues Ala-274–Tyr-291. Residues Asp-292–Val-298 are Mitochondrial intermembrane-facing.

Belongs to the mitochondrial carrier (TC 2.A.29) family. In terms of assembly, monomer. Found in a complex with ARL2, ARL2BP and SLC25A4/ANT1. Interacts with ARL2BP. Interacts with TIMM44; leading to inhibit the presequence translocase TIMM23, thereby promoting stabilization of PINK1. Under cell death induction, transglutaminated by TGM2. Transglutamination leads to formation of covalent cross-links between a glutamine and the epsilon-amino group of a lysine residue, forming polymers. As to expression, detected in heart muscle (at protein level). Detected in heart.

It localises to the mitochondrion inner membrane. Its subcellular location is the membrane. It catalyses the reaction ADP(in) + ATP(out) = ADP(out) + ATP(in). It carries out the reaction H(+)(in) = H(+)(out). With respect to regulation, the matrix-open state (m-state) is inhibited by the membrane-permeable bongkrekic acid (BKA). The cytoplasmic-open state (c-state) is inhibited by the membrane-impermeable toxic inhibitor carboxyatractyloside (CATR). Proton transporter activity is inhibited by ADP:ATP antiporter activity. Functionally, ADP:ATP antiporter that mediates import of ADP into the mitochondrial matrix for ATP synthesis, and export of ATP out to fuel the cell. Cycles between the cytoplasmic-open state (c-state) and the matrix-open state (m-state): operates by the alternating access mechanism with a single substrate-binding site intermittently exposed to either the cytosolic (c-state) or matrix (m-state) side of the inner mitochondrial membrane. In addition to its ADP:ATP antiporter activity, also involved in mitochondrial uncoupling and mitochondrial permeability transition pore (mPTP) activity. Plays a role in mitochondrial uncoupling by acting as a proton transporter: proton transport uncouples the proton flows via the electron transport chain and ATP synthase to reduce the efficiency of ATP production and cause mitochondrial thermogenesis. Proton transporter activity is inhibited by ADP:ATP antiporter activity, suggesting that SLC25A4/ANT1 acts as a master regulator of mitochondrial energy output by maintaining a delicate balance between ATP production (ADP:ATP antiporter activity) and thermogenesis (proton transporter activity). Proton transporter activity requires free fatty acids as cofactor, but does not transport it. Probably mediates mitochondrial uncoupling in tissues that do not express UCP1. Also plays a key role in mPTP opening, a non-specific pore that enables free passage of the mitochondrial membranes to solutes of up to 1.5 kDa, and which contributes to cell death. It is however unclear if SLC25A4/ANT1 constitutes a pore-forming component of mPTP or regulates it. Acts as a regulator of mitophagy independently of ADP:ATP antiporter activity: promotes mitophagy via interaction with TIMM44, leading to inhibit the presequence translocase TIMM23, thereby promoting stabilization of PINK1. The polypeptide is ADP/ATP translocase 1 (Bos taurus (Bovine)).